A 647-amino-acid chain; its full sequence is Putative lipase YDL109C (647 aa).

The active-site Charge relay system is serine 274. Positions 502–523 (PPPSPTLYEGTAAKEGETRKTR) are disordered. The span at 513-523 (AAKEGETRKTR) shows a compositional bias: basic and acidic residues.

It belongs to the putative lipase ROG1 family.

Involved in lipid metabolism. The sequence is that of Putative lipase YDL109C from Saccharomyces cerevisiae (strain ATCC 204508 / S288c) (Baker's yeast).